A 166-amino-acid chain; its full sequence is Photosystem I assembly protein Ycf3 (166 aa).

TPR repeat units lie at residues 35–68 (AFTY…EIDA), 72–105 (SYML…NPRL), and 120–153 (GEQA…SPTS).

It belongs to the Ycf3 family.

It is found in the plastid. Its subcellular location is the chloroplast thylakoid membrane. Functionally, essential for the assembly of the photosystem I (PSI) complex. May act as a chaperone-like factor to guide the assembly of the PSI subunits. In Bigelowiella natans (Pedinomonas minutissima), this protein is Photosystem I assembly protein Ycf3.